The following is a 531-amino-acid chain: Probable cytochrome P450 4e1 (531 aa).

Residues Glu307 and Cys444 each coordinate heme.

Belongs to the cytochrome P450 family. Heme is required as a cofactor.

It localises to the endoplasmic reticulum membrane. It is found in the microsome membrane. Functionally, may be involved in the metabolism of insect hormones and in the breakdown of synthetic insecticides. The sequence is that of Probable cytochrome P450 4e1 (Cyp4e1) from Drosophila melanogaster (Fruit fly).